A 226-amino-acid polypeptide reads, in one-letter code: 3-isopropylmalate dehydratase small subunit (226 aa).

Residues 204–226 form a disordered region; the sequence is EAETVESAREPEAVEWAGPLADR.

Belongs to the LeuD family. LeuD type 1 subfamily. As to quaternary structure, heterodimer of LeuC and LeuD.

The catalysed reaction is (2R,3S)-3-isopropylmalate = (2S)-2-isopropylmalate. It functions in the pathway amino-acid biosynthesis; L-leucine biosynthesis; L-leucine from 3-methyl-2-oxobutanoate: step 2/4. Catalyzes the isomerization between 2-isopropylmalate and 3-isopropylmalate, via the formation of 2-isopropylmaleate. This chain is 3-isopropylmalate dehydratase small subunit, found in Bifidobacterium animalis subsp. lactis (strain AD011).